Here is a 662-residue protein sequence, read N- to C-terminus: Fusion glycoprotein F0 (662 aa).

A disordered region spans residues methionine 1–arginine 73. A signal peptide spans methionine 1–alanine 135. Over residues serine 8–arginine 19 the composition is skewed to polar residues. Positions threonine 64–arginine 73 are enriched in basic residues. Over glutamine 136 to serine 608 the chain is Extracellular. Residues asparagine 141, asparagine 173, and asparagine 179 are each glycosylated (N-linked (GlcNAc...) asparagine; by host). Residues phenylalanine 225–leucine 249 form a fusion peptide region. Residues histidine 250–glutamate 278 are a coiled coil. 4 disulfide bridges follow: cysteine 446/cysteine 455, cysteine 470/cysteine 478, cysteine 502/cysteine 507, and cysteine 509/cysteine 532. Residues asparagine 574–valine 599 adopt a coiled-coil conformation. A helical transmembrane segment spans residues leucine 609–cysteine 629. Residues lysine 630–leucine 662 are Cytoplasmic-facing.

Belongs to the paramyxoviruses fusion glycoprotein family. In terms of assembly, homotrimer of disulfide-linked F1-F2. In terms of processing, the inactive precursor F0 is glycosylated and proteolytically cleaved into F1 and F2 to be functionally active. The cleavage is mediated by cellular proteases during the transport and maturation of the polypeptide.

The protein localises to the virion membrane. The protein resides in the host cell membrane. In terms of biological role, class I viral fusion protein. Under the current model, the protein has at least 3 conformational states: pre-fusion native state, pre-hairpin intermediate state, and post-fusion hairpin state. During viral and plasma cell membrane fusion, the heptad repeat (HR) regions assume a trimer-of-hairpins structure, positioning the fusion peptide in close proximity to the C-terminal region of the ectodomain. The formation of this structure appears to drive apposition and subsequent fusion of viral and plasma cell membranes. Directs fusion of viral and cellular membranes leading to delivery of the nucleocapsid into the cytoplasm. This fusion is pH independent and occurs directly at the outer cell membrane. The trimer of F1-F2 (F protein) probably interacts with H at the virion surface. Upon HN binding to its cellular receptor, the hydrophobic fusion peptide is unmasked and interacts with the cellular membrane, inducing the fusion between cell and virion membranes. Later in infection, F proteins expressed at the plasma membrane of infected cells could mediate fusion with adjacent cells to form syncytia, a cytopathic effect that could lead to tissue necrosis. The polypeptide is Fusion glycoprotein F0 (F) (Canine distemper virus (strain Onderstepoort) (CDV)).